The primary structure comprises 363 residues: 43 kDa protein (363 aa).

The polypeptide is 43 kDa protein (P43) (Lepidoptera (butterflies and moths)).